The sequence spans 278 residues: Energy-coupling factor transporter ATP-binding protein EcfA (278 aa).

The ABC transporter domain occupies 5-240 (LETKNLVYNY…KEVIDEADLR (236 aa)). Residue 38-45 (GHNGAGKS) participates in ATP binding.

The protein belongs to the ABC transporter superfamily. Energy-coupling factor EcfA family. In terms of assembly, forms a stable energy-coupling factor (ECF) transporter complex composed of 2 membrane-embedded substrate-binding proteins (S component), 2 ATP-binding proteins (A component) and 2 transmembrane proteins (T component).

It is found in the cell membrane. ATP-binding (A) component of a common energy-coupling factor (ECF) ABC-transporter complex. Unlike classic ABC transporters this ECF transporter provides the energy necessary to transport a number of different substrates. The chain is Energy-coupling factor transporter ATP-binding protein EcfA from Methanosphaera stadtmanae (strain ATCC 43021 / DSM 3091 / JCM 11832 / MCB-3).